The chain runs to 1000 residues: C-module-binding factor A (1000 aa).

One can recognise a JmjC domain in the interval 113 to 280; sequence PREWQEYLSH…ISYFSSLPHT (168 aa). The PHD-type; atypical zinc finger occupies 489 to 544; sequence KIKCHRCEKRFKKFSIIFCTNCNARFCEQCVVNTFGQNFQVLMKRNEWECFCCKGL. The RING-type; degenerate zinc finger occupies 492 to 542; sequence CHRCEKRFKKFSIIFCTNCNARFCEQCVVNTFGQNFQVLMKRNEWECFCCK. Disordered regions lie at residues 561 to 647 and 660 to 818; these read RILN…SSYS and SYGS…KNLK. Low complexity-rich tracts occupy residues 574-647, 660-683, 700-710, 732-751, and 760-789; these read NNNN…SSYS, SYGS…NNNN, SSSSGSGSSNS, NNNN…NNHH, and NNNN…STST. The segment covering 805–818 has biased composition (basic and acidic residues); the sequence is DNDKPKGRPPKNLK. Residues 810–818 constitute a DNA-binding region (a.T hook); the sequence is KGRPPKNLK.

In terms of assembly, monomer.

It is found in the nucleus. Its function is as follows. Transcriptional regulator involved in phagocytosis and pinocytosis. Both activates and represses transcription. Regulates expression of acaA, carA, pkaC, csaA, cotB and lagC. Promotes amplification of the tRNA gene-associated retrotransposon TRE5-A, a mobile genetic element formerly called as Dictyostelium repetitive element (DRE). Suppresses agnC and agnE encoding argonaute proteins which are part of a RNA interference pathway controlling TRE5-A amplification. Required for amplification of both sense and antisense RNA transcripts, but does not activate their promoters found in A-module and C-module of the TRE5-A, respectively. Nevertheless, binds to distinct DNA sequences containing A and T stretches within the C-module in vitro. This Dictyostelium discoideum (Social amoeba) protein is C-module-binding factor A.